The sequence spans 199 residues: DNA repair RAD52-like protein 2, chloroplastic (199 aa).

A chloroplast-targeting transit peptide spans 1-40; sequence MALQVQQTSAAFTISSPSTAAARIKLSPFRTVAVNRGVRC. S41 carries the post-translational modification N-acetylserine.

Belongs to the RAD52 family. In terms of tissue distribution, expressed in roots and shoots. Expressed at low levels in cauline leaves, flower buds, flowers and siliques.

The protein localises to the plastid. Its subcellular location is the chloroplast. In terms of biological role, involved in double-stranded DNA break repair. This chain is DNA repair RAD52-like protein 2, chloroplastic, found in Arabidopsis thaliana (Mouse-ear cress).